We begin with the raw amino-acid sequence, 451 residues long: Type 3 secretion system ATPase (451 aa).

Position 184-189 (184-189 (GGGKST)) interacts with ATP.

This sequence belongs to the ATPase alpha/beta chains family. T3SS ATPase subfamily. As to quaternary structure, the core secretion machinery of the T3SS is composed of approximately 20 different proteins, including cytoplasmic components, a base, an export apparatus and a needle. This subunit is part of the cytosolic complex. Forms homohexamers.

It is found in the cytoplasm. The catalysed reaction is ATP + H2O + cellular proteinSide 1 = ADP + phosphate + cellular proteinSide 2.. Functionally, ATPase component of the type III secretion system (T3SS), also called injectisome, which is used to inject bacterial effector proteins into eukaryotic host cells. Acts as a molecular motor to provide the energy that is required for the export of proteins. Required for type III secretion apparatus (T3SA) formation, proper protein secretion, host cell invasion and virulence. May play a critical role in T3SS substrate recognition, disassembly of the effector/chaperone complex and unfolding of the effector in an ATP-dependent manner prior to secretion. The polypeptide is Type 3 secretion system ATPase (Sinorhizobium fredii (strain NBRC 101917 / NGR234)).